The sequence spans 418 residues: Glutamyl-tRNA reductase (418 aa).

Substrate contacts are provided by residues 49 to 52, serine 107, 112 to 114, and glutamine 118; these read TCNR and EPQ. Cysteine 50 functions as the Nucleophile in the catalytic mechanism. 187-192 provides a ligand contact to NADP(+); the sequence is GAGETI.

The protein belongs to the glutamyl-tRNA reductase family. Homodimer.

The catalysed reaction is (S)-4-amino-5-oxopentanoate + tRNA(Glu) + NADP(+) = L-glutamyl-tRNA(Glu) + NADPH + H(+). Its pathway is porphyrin-containing compound metabolism; protoporphyrin-IX biosynthesis; 5-aminolevulinate from L-glutamyl-tRNA(Glu): step 1/2. In terms of biological role, catalyzes the NADPH-dependent reduction of glutamyl-tRNA(Glu) to glutamate 1-semialdehyde (GSA). This is Glutamyl-tRNA reductase from Vibrio campbellii (strain ATCC BAA-1116).